Consider the following 518-residue polypeptide: Lysine--tRNA ligase (518 aa).

Residues glutamate 407 and glutamate 414 each contribute to the Mg(2+) site.

The protein belongs to the class-II aminoacyl-tRNA synthetase family. Homodimer. Requires Mg(2+) as cofactor.

The protein resides in the cytoplasm. The enzyme catalyses tRNA(Lys) + L-lysine + ATP = L-lysyl-tRNA(Lys) + AMP + diphosphate. This is Lysine--tRNA ligase from Helicobacter hepaticus (strain ATCC 51449 / 3B1).